A 560-amino-acid polypeptide reads, in one-letter code: Glucose-6-phosphate isomerase, cytosolic (560 aa).

N-acetylalanine is present on Ala2. The active-site Proton donor is the Glu361. Active-site residues include His392 and Lys517.

Belongs to the GPI family. As to quaternary structure, homodimer.

It localises to the cytoplasm. It catalyses the reaction alpha-D-glucose 6-phosphate = beta-D-fructose 6-phosphate. Its pathway is carbohydrate degradation; glycolysis; D-glyceraldehyde 3-phosphate and glycerone phosphate from D-glucose: step 2/4. This Arabidopsis lyrata subsp. petraea (Northern rock-cress) protein is Glucose-6-phosphate isomerase, cytosolic (PGIC).